We begin with the raw amino-acid sequence, 1020 residues long: Inner tegument protein (1020 aa).

The interval 539–1020 (WGVRIPDRDT…EIDAIFNNTK (482 aa)) is interaction with large tegument protein.

This sequence belongs to the herpesviridae inner tegument protein family. As to quaternary structure, interacts (via C-terminus) with the large tegument protein/LTP (via N-terminus).

Its subcellular location is the virion tegument. It is found in the host cytoplasm. The protein localises to the host nucleus. The protein resides in the host Golgi apparatus. It localises to the host trans-Golgi network. Its function is as follows. Plays an essential role in cytoplasmic secondary envelopment during viral egress. Interacts with the capsid via the large tegument protein/LTP and participates in its transport to the host trans-Golgi network (TGN) where secondary envelopment occurs. Modulates tegumentation and capsid accumulation at the viral assembly complex. The protein is Inner tegument protein of Equine herpesvirus 1 (strain Ab4p) (EHV-1).